A 221-amino-acid polypeptide reads, in one-letter code: Sugar transporter SWEET1 (221 aa).

A run of 7 helical transmembrane segments spans residues 3–23, 44–63, 68–88, 102–122, 129–149, 160–180, and 186–206; these read AGGV…LGMF, FLPF…YGVL, TLII…LAYL, ATLL…VPDL, LGLF…ADLA, LSFS…IYGF, and YITV…VLFY. The MtN3/slv 1 domain occupies 10 to 94; sequence FLSSACVLFT…LAYLHYSPQK (85 aa). In terms of domain architecture, MtN3/slv 2 spans 127–212; sequence QQLGLFCSVF…VLFYKYPPEQ (86 aa). A mediates interaction with TRPV2 region spans residues 149 to 221; the sequence is AKIIQTKSTQ…QDTKYRLLQT (73 aa).

This sequence belongs to the SWEET sugar transporter family. As to quaternary structure, interacts with TRPV2; the interaction probably occurs intracellularly and depends on TRPV2 N-glycosylation.

The protein resides in the golgi apparatus membrane. It is found in the cell membrane. Mediates sugar transport across membranes. May stimulate V(D)J recombination by the activation of RAG1. This Rattus norvegicus (Rat) protein is Sugar transporter SWEET1 (Slc50a1).